Consider the following 275-residue polypeptide: Esterase AAEL000016 (275 aa).

The disordered stretch occupies residues 1 to 21 (MMANETAAKSTKSSPTPAVEP). Polar residues predominate over residues 7–16 (AAKSTKSSPT). Catalysis depends on charge relay system residues Ser129, Asp187, and His214. A disordered region spans residues 253 to 275 (LVDDSGPAGNGVHDDDDDDDDSD). The span at 266–275 (DDDDDDDDSD) shows a compositional bias: acidic residues.

It belongs to the LovG family.

The protein is Esterase AAEL000016 of Aedes aegypti (Yellowfever mosquito).